The chain runs to 88 residues: Augerpeptide Hhe9a (88 aa).

The signal sequence occupies residues 1-21 (MMTKTGLVLLFAFLLVFPVSS). A propeptide spanning residues 22 to 49 (LPMDAEAGHARLEMDKRDAGNEAWTRLL) is cleaved from the precursor. 3 cysteine pairs are disulfide-bonded: cysteine 56–cysteine 71, cysteine 61–cysteine 73, and cysteine 67–cysteine 86.

As to expression, expressed by the venom duct.

The protein resides in the secreted. This chain is Augerpeptide Hhe9a, found in Hastula hectica (Sea snail).